Consider the following 109-residue polypeptide: Thiosulfate sulfurtransferase GlpE (109 aa).

The region spanning 16–104 (RNAGAVIVDI…WRHTYPSDVE (89 aa)) is the Rhodanese domain. Residue Cys64 is the Cysteine persulfide intermediate of the active site.

It belongs to the GlpE family.

It localises to the cytoplasm. The catalysed reaction is thiosulfate + hydrogen cyanide = thiocyanate + sulfite + 2 H(+). The enzyme catalyses thiosulfate + [thioredoxin]-dithiol = [thioredoxin]-disulfide + hydrogen sulfide + sulfite + 2 H(+). In terms of biological role, transferase that catalyzes the transfer of sulfur from thiosulfate to thiophilic acceptors such as cyanide or dithiols. May function in a CysM-independent thiosulfate assimilation pathway by catalyzing the conversion of thiosulfate to sulfite, which can then be used for L-cysteine biosynthesis. The chain is Thiosulfate sulfurtransferase GlpE from Stutzerimonas stutzeri (strain A1501) (Pseudomonas stutzeri).